The primary structure comprises 179 residues: Large ribosomal subunit protein uL5 (179 aa).

The protein belongs to the universal ribosomal protein uL5 family. In terms of assembly, part of the 50S ribosomal subunit; part of the 5S rRNA/L5/L18/L25 subcomplex. Contacts the 5S rRNA and the P site tRNA. Forms a bridge to the 30S subunit in the 70S ribosome.

Its function is as follows. This is one of the proteins that bind and probably mediate the attachment of the 5S RNA into the large ribosomal subunit, where it forms part of the central protuberance. In the 70S ribosome it contacts protein S13 of the 30S subunit (bridge B1b), connecting the 2 subunits; this bridge is implicated in subunit movement. Contacts the P site tRNA; the 5S rRNA and some of its associated proteins might help stabilize positioning of ribosome-bound tRNAs. This Rickettsia peacockii (strain Rustic) protein is Large ribosomal subunit protein uL5.